Consider the following 120-residue polypeptide: Ribosome-binding factor A (120 aa).

The protein belongs to the RbfA family. Monomer. Binds 30S ribosomal subunits, but not 50S ribosomal subunits or 70S ribosomes.

It is found in the cytoplasm. One of several proteins that assist in the late maturation steps of the functional core of the 30S ribosomal subunit. Associates with free 30S ribosomal subunits (but not with 30S subunits that are part of 70S ribosomes or polysomes). Required for efficient processing of 16S rRNA. May interact with the 5'-terminal helix region of 16S rRNA. In Rickettsia peacockii (strain Rustic), this protein is Ribosome-binding factor A.